Reading from the N-terminus, the 596-residue chain is Zinc finger E-box-binding homeobox protein zag-1 (596 aa).

The segment at 24 to 46 (FKCPECTKAFKFKHHLKEHIRIH) adopts a C2H2-type 1 zinc-finger fold. The C2H2-type 2; degenerate zinc finger occupies 52 to 72 (FECQQCHKRFSHSGSYSSHMS). Over residues 133 to 145 (LENGTSPTPTQEP) the composition is skewed to polar residues. 3 disordered regions span residues 133-225 (LENG…RPLR), 324-369 (NNSL…EPEW), and 395-421 (GFVT…GSSS). Basic and acidic residues predominate over residues 165-179 (SEVKTEVKTEVKTED). Over residues 188–200 (PAVSMSLSPAPEQ) the composition is skewed to polar residues. Low complexity predominate over residues 201–216 (NGNESMNNGGSGSDGK). The segment at residues 223 to 282 (PLRSRSFLNDSQVAVLQNHFKRNPFPSKYELSAVAEQIGVNKRVVQVWFQNTRAKERRSN) is a DNA-binding region (homeobox). Residues 331–355 (QDERNNENTDEVMDHDGLKDGKETP) are compositionally biased toward basic and acidic residues. 2 consecutive C2H2-type zinc fingers follow at residues 481 to 503 (FSCD…KYEH) and 509 to 531 (YKCD…KRLH). The C2H2-type 5; degenerate zinc finger occupies 537 to 560 (FQCDKCLKRFSHSGSYSQHMNHRY). A disordered region spans residues 569-596 (QPASPSDVLNGGSVTVSPSSSNTPPPST). Low complexity predominate over residues 578–590 (NGGSVTVSPSSSN).

As to expression, expressed in the six touch receptor neurons (TRNs) but not in the FLP and PVD neurons. Expressed in the M4 cholinergic motor neuron.

It localises to the nucleus. In terms of biological role, transcription factor. Down-regulates expression of genes involved in either the synthesis or reuptake of serotonin, dopamine and GABA. Acts as a transcriptional repressor to regulate multiple, discrete, neuron-specific aspects of terminal differentiation, including cell migration, axonal development and gene expression. Promotes touch receptor neuron differentiation by repressing the expression of egl-44 and egl-46. As egl-44 and egl-46, probably acting as a heterodimer, repress expression of zag-1 in FLP neurons, together these proteins form a bistable, negative-feedback loop that regulates the choice between neuronal fates. Required for axon guidance. Involved in the proper development of the pharynx. Required for pharynx isthmus peristalsis, probably via a role in the differentiation of the M4 cholinergic motor neuron. Directly represses its own transcription by interacting with conserved E-box sequence motifs 5'-CACCTG-3' in its own promoter. May also act as a transcriptional activator of the homeodomain ceh-28. This chain is Zinc finger E-box-binding homeobox protein zag-1, found in Caenorhabditis elegans.